Reading from the N-terminus, the 199-residue chain is Recombination protein RecR (199 aa).

The C4-type zinc-finger motif lies at 58 to 73 (CRTCFSLSDQPECRIC). The 96-residue stretch at 81 to 176 (SIICVVEKPT…NVTRIASGVP (96 aa)) folds into the Toprim domain.

This sequence belongs to the RecR family.

May play a role in DNA repair. It seems to be involved in an RecBC-independent recombinational process of DNA repair. It may act with RecF and RecO. The protein is Recombination protein RecR of Desulforapulum autotrophicum (strain ATCC 43914 / DSM 3382 / VKM B-1955 / HRM2) (Desulfobacterium autotrophicum).